Here is a 510-residue protein sequence, read N- to C-terminus: Major facilitator superfamily domain-containing protein 4A (510 aa).

The next 12 helical transmembrane spans lie at 19 to 39 (LTYW…GPTL), 53 to 73 (ISWV…LGGV), 82 to 102 (LWAL…IPFC), 107 to 127 (VLAS…TVAN), 139 to 159 (AFFL…SPLI), 218 to 238 (YAFW…LFLL), 303 to 323 (FFAI…MMGA), 345 to 365 (GYLP…SIPV), 380 to 400 (VGVV…IFLF), 401 to 421 (VGTA…LAYT), 434 to 454 (VLVT…GLIF), and 462 to 482 (FLVC…LLLF).

Belongs to the major facilitator superfamily.

The protein localises to the membrane. This Mus musculus (Mouse) protein is Major facilitator superfamily domain-containing protein 4A.